The following is a 204-amino-acid chain: Large ribosomal subunit protein uL4 (204 aa).

A compositionally biased stretch (polar residues) spans 42–52 (GTKAQKSRSQV). The disordered stretch occupies residues 42-70 (GTKAQKSRSQVSGTTKKSKKQKGGGARHG).

It belongs to the universal ribosomal protein uL4 family. In terms of assembly, part of the 50S ribosomal subunit.

Its function is as follows. One of the primary rRNA binding proteins, this protein initially binds near the 5'-end of the 23S rRNA. It is important during the early stages of 50S assembly. It makes multiple contacts with different domains of the 23S rRNA in the assembled 50S subunit and ribosome. Functionally, forms part of the polypeptide exit tunnel. The protein is Large ribosomal subunit protein uL4 of Xylella fastidiosa (strain M12).